Here is a 141-residue protein sequence, read N- to C-terminus: Transcriptional regulator MraZ (141 aa).

SpoVT-AbrB domains are found at residues 5–47 (EYNH…PNEE) and 75–118 (AADC…SKER).

The protein belongs to the MraZ family. As to quaternary structure, forms oligomers.

The protein localises to the cytoplasm. It is found in the nucleoid. This chain is Transcriptional regulator MraZ, found in Lachnoclostridium phytofermentans (strain ATCC 700394 / DSM 18823 / ISDg) (Clostridium phytofermentans).